The primary structure comprises 620 residues: Chaperone protein HscA homolog (620 aa).

It belongs to the heat shock protein 70 family.

Its function is as follows. Chaperone involved in the maturation of iron-sulfur cluster-containing proteins. Has a low intrinsic ATPase activity which is markedly stimulated by HscB. The sequence is that of Chaperone protein HscA homolog from Bordetella petrii (strain ATCC BAA-461 / DSM 12804 / CCUG 43448).